Reading from the N-terminus, the 2144-residue chain is Cadherin EGF LAG seven-pass G-type receptor 2 (2144 aa).

Cadherin domains follow at residues 1-40 (EDQV…APQF), 41-146 (LRDS…PPVF), 147-248 (EQDE…PPVL), and 253-371 (ILFN…SPLL). Residues 1–1605 (EDQVSYTLAI…GEILPLKTLT (1605 aa)) lie on the Extracellular side of the membrane. Asn-261, Asn-301, Asn-407, and Asn-437 each carry an N-linked (GlcNAc...) asparagine glycan. The EGF-like 1; calcium-binding domain occupies 453–511 (DDNICLREPCENYMRCVSVLRFDSSAPFIASSSVLFRPIHPVGGLRCRCPPGFTGDYCE). Intrachain disulfides connect Cys-457–Cys-468, Cys-462–Cys-499, Cys-501–Cys-510, Cys-517–Cys-528, Cys-522–Cys-537, Cys-539–Cys-548, Cys-557–Cys-568, Cys-562–Cys-578, and Cys-580–Cys-590. In terms of domain architecture, EGF-like 2; calcium-binding spans 513–549 (EVDLCYSRPCGPHGHCRSREGGYTCLCRDGYTGEHCE). Residues 553-591 (RSGRCTPGVCKNGGTCVNLLVGGFKCDCPSGDFEKPFCQ) enclose the EGF-like 3; calcium-binding domain. Positions 592–796 (VTTRSFPARS…IANNGTVPGC (205 aa)) constitute a Laminin G-like 1 domain. N-linked (GlcNAc...) asparagine glycans are attached at residues Asn-726 and Asn-790. 4 cysteine pairs are disulfide-bonded: Cys-770-Cys-796, Cys-803-Cys-814, Cys-808-Cys-823, and Cys-825-Cys-834. An EGF-like 4; calcium-binding domain is found at 799 to 835 (KKNVCDSNTCHNGGTCVNQWDAFSCECPLGFGGKSCA). Asn-816 bears the (3R)-3-hydroxyasparagine mark. The region spanning 839 to 1016 (ANPQRFLGSS…GESINVEPGC (178 aa)) is the Laminin G-like 2 domain. A glycan (N-linked (GlcNAc...) asparagine) is linked at Asn-966. Cystine bridges form between Cys-986–Cys-1016, Cys-1022–Cys-1033, Cys-1027–Cys-1042, Cys-1044–Cys-1053, Cys-1057–Cys-1068, Cys-1062–Cys-1080, Cys-1082–Cys-1091, Cys-1112–Cys-1124, Cys-1114–Cys-1131, Cys-1133–Cys-1146, Cys-1149–Cys-1161, Cys-1151–Cys-1168, Cys-1170–Cys-1179, and Cys-1182–Cys-1194. Residues 1018–1053 (WPDPCDSNPCPTNSYCSNDWDSYSCSCDPGYYGDNC) enclose the EGF-like 5; calcium-binding domain. Residue Asn-1035 is modified to (3R)-3-hydroxyasparagine. Asn-1052 carries N-linked (GlcNAc...) asparagine glycosylation. Residues 1054–1092 (TNVCDLNPCEHQSACTRKPSAPHGYICECLPNYLGPYCE) form the EGF-like 6; calcium-binding domain. In terms of domain architecture, EGF-like 7; calcium-binding spans 1108 to 1147 (TCGPCNCDVSKGFDPDCNKTSGECHCKENHYRPPSSPTCL). A glycan (N-linked (GlcNAc...) asparagine) is linked at Asn-1125. The Laminin EGF-like domain occupies 1149 to 1196 (CDCYPTGSLSRVCDPEDGQCPCKPGVIGRQCDRCDNPFAEVTTNGCEV). N-linked (GlcNAc...) asparagine glycans are attached at residues Asn-1249, Asn-1268, and Asn-1286. Positions 1424-1594 (ETTVILPESV…AVLMDVSRRE (171 aa)) constitute a GAIN-B domain. The interval 1439–1466 (PMVRSAGPGEAQETEELARRQRRHPELS) is disordered. Disulfide bonds link Cys-1544–Cys-1576 and Cys-1564–Cys-1578. Positions 1544–1594 (CVFWNHSILVSGTGGWSARGCEVVFRNESHVSCQCNHMTSFAVLMDVSRRE) are GPS. Residues Asn-1548 and Asn-1570 are each glycosylated (N-linked (GlcNAc...) asparagine). The helical transmembrane segment at 1606–1626 (YVALGVTLAALMITFLFLTLL) threads the bilayer. The Cytoplasmic segment spans residues 1627–1641 (RALRSNQHGIRRNLT). Residues 1642-1662 (AALGLAQLVFLLGINQADLPF) traverse the membrane as a helical segment. Ala-1663 is a topological domain (extracellular). The chain crosses the membrane as a helical span at residues 1664–1684 (CTVIAILLHFLYLCTFSWALL). The Cytoplasmic portion of the chain corresponds to 1685–1705 (EALHLYRALTEVRDVNASPMR). Residues 1706–1726 (FYYMLGWGVPAFITGLAVGLD) traverse the membrane as a helical segment. Topologically, residues 1727-1744 (PEGYGNPDFCWLSIYDTL) are extracellular. Residues 1745-1765 (IWSFAGPVAFAVSMSVFLYIL) form a helical membrane-spanning segment. At 1766–1789 (SARASCAAQRQGFEKKGPVSGLRS) the chain is on the cytoplasmic side. Residues 1790–1810 (SFTVLLLLSATWLLALLSVNS) traverse the membrane as a helical segment. Residues 1811–1816 (DTLLFH) are Extracellular-facing. The chain crosses the membrane as a helical span at residues 1817–1837 (YLFAACNCVQGPFIFLSYVVL). Residues 1838 to 2144 (SKEVRKALKF…SEFLFFNFLH (307 aa)) lie on the Cytoplasmic side of the membrane. The interval 1914–2109 (TLNPGQVPPG…PPRPPPRQSL (196 aa)) is disordered. Residues 1943 to 1955 (TDSDSDLSLEDDQ) show a composition bias toward acidic residues. Residues 2016 to 2025 (GTTTKENSGS) are compositionally biased toward polar residues. The span at 2028–2040 (LEERPRENGDALT) shows a compositional bias: basic and acidic residues. Over residues 2082-2095 (GTGSSRGSTASEGS) the composition is skewed to polar residues.

Belongs to the G-protein coupled receptor 2 family. LN-TM7 subfamily. As to quaternary structure, heterodimer of 2 chains generated by proteolytic processing; the large extracellular N-terminal fragment and the membrane-bound C-terminal fragment predominantly remain associated and non-covalently linked. The iron and 2-oxoglutarate dependent 3-hydroxylation of aspartate and asparagine is (R) stereospecific within EGF domains. Post-translationally, autoproteolytically processed at the GPS region of the GAIN-B domain; this cleavage modulates receptor activity. In terms of tissue distribution, expressed in the brain. High expression in cerebellum and olfactory bulb. Weaker expression in cerebral cortex, hippocampus and brain stem.

It is found in the cell membrane. Receptor that may have an important role in cell/cell signaling during nervous system formation. This Rattus norvegicus (Rat) protein is Cadherin EGF LAG seven-pass G-type receptor 2.